The chain runs to 257 residues: MKHSKKLFLCVSFLLITIFIGGGGFMNKDESKETEIKKSFNKTLSMYPIKNLEDLYDKEGYRDEEFNKGDKGMWIVHSEMNIQKKGKALESRGMVLYMDRNTRTTHGYFILTKIKDTGKVKTDDSEKKYPVKLENNKIIPTKQIKDEKLKKEIENFKFFSQYGNFKDLKDYKDGEVSYNPNAPNYSAKYQLSNNDYNVKQIRKRYDIPTEQAPKLLLKGTGDLKGSSTGSKNIEFTFVEKKGENIYFTDSVEYTPSG.

The helical transmembrane segment at 7–27 (LFLCVSFLLITIFIGGGGFMN) threads the bilayer.

This sequence belongs to the staphylococcal tandem lipoprotein family.

Its subcellular location is the cell membrane. This is an uncharacterized protein from Staphylococcus epidermidis (strain ATCC 12228 / FDA PCI 1200).